Here is a 257-residue protein sequence, read N- to C-terminus: 5'-nucleotidase SurE (257 aa).

A divalent metal cation contacts are provided by Asp13, Asp14, Ser44, and Asn100.

This sequence belongs to the SurE nucleotidase family. A divalent metal cation is required as a cofactor.

It is found in the cytoplasm. It carries out the reaction a ribonucleoside 5'-phosphate + H2O = a ribonucleoside + phosphate. Nucleotidase that shows phosphatase activity on nucleoside 5'-monophosphates. In Phocaeicola vulgatus (strain ATCC 8482 / DSM 1447 / JCM 5826 / CCUG 4940 / NBRC 14291 / NCTC 11154) (Bacteroides vulgatus), this protein is 5'-nucleotidase SurE.